The following is a 433-amino-acid chain: Enolase (433 aa).

Q167 contacts (2R)-2-phosphoglycerate. E209 (proton donor) is an active-site residue. D246 contributes to the Mg(2+) binding site. A Plasminogen-binding motif motif is present at residues 252–260 (FYDAEKKEY). Mg(2+)-binding residues include E291 and D318. K343, R372, S373, and K394 together coordinate (2R)-2-phosphoglycerate. K343 functions as the Proton acceptor in the catalytic mechanism.

This sequence belongs to the enolase family. In terms of assembly, component of the RNA degradosome, a multiprotein complex involved in RNA processing and mRNA degradation. It depends on Mg(2+) as a cofactor.

Its subcellular location is the cell inner membrane. The protein localises to the cell outer membrane. The protein resides in the cytoplasm. It is found in the secreted. It localises to the cell surface. It carries out the reaction (2R)-2-phosphoglycerate = phosphoenolpyruvate + H2O. The protein operates within carbohydrate degradation; glycolysis; pyruvate from D-glyceraldehyde 3-phosphate: step 4/5. Its function is as follows. Catalyzes the reversible conversion of 2-phosphoglycerate (2-PG) into phosphoenolpyruvate (PEP). It is essential for the degradation of carbohydrates via glycolysis. Functionally, 'Moonlights' as a plasminogen receptor and plasmin activator. Binds host (human) plasminogen in vitro. Binds human plasmin and plasminogen on the cell surface; enhances the activity of host tissue-specific plasminogen activator (tPA). Plasmin bound to bacteria is partially protected from its physiological inhibitor alpha-2AP (SERPINF2). In Aeromonas hydrophila, this protein is Enolase.